Consider the following 89-residue polypeptide: Small ribosomal subunit protein uS15 (89 aa).

The tract at residues Met-1–Ala-25 is disordered. Residues Lys-8–Ala-25 show a composition bias toward polar residues.

This sequence belongs to the universal ribosomal protein uS15 family. In terms of assembly, part of the 30S ribosomal subunit. Forms a bridge to the 50S subunit in the 70S ribosome, contacting the 23S rRNA.

One of the primary rRNA binding proteins, it binds directly to 16S rRNA where it helps nucleate assembly of the platform of the 30S subunit by binding and bridging several RNA helices of the 16S rRNA. In terms of biological role, forms an intersubunit bridge (bridge B4) with the 23S rRNA of the 50S subunit in the ribosome. This Synechococcus sp. (strain CC9902) protein is Small ribosomal subunit protein uS15.